The chain runs to 157 residues: Small ribosomal subunit protein uS7 (157 aa).

It belongs to the universal ribosomal protein uS7 family. In terms of assembly, part of the 30S ribosomal subunit. Contacts proteins S9 and S11.

One of the primary rRNA binding proteins, it binds directly to 16S rRNA where it nucleates assembly of the head domain of the 30S subunit. Is located at the subunit interface close to the decoding center, probably blocks exit of the E-site tRNA. This is Small ribosomal subunit protein uS7 from Francisella tularensis subsp. tularensis (strain FSC 198).